We begin with the raw amino-acid sequence, 242 residues long: MNDVIIRQLAHLIPYQPLWEAMQTFTALRQSQTTDEIWFLEHEPVFTQGLAGKPEHVLNSGNIPLIRTDRGGQVTYHGPGQLMMYLLLDLNRLGLSTRTFVRTIENTVAESLQEWGIPAQGKETAPGVYVDDKKICSIGLRVRKGFSYHGLALNVAMDLTPFSCINPCGFKGLMMTQIQDYVNPIEMDAVKRTIIPLFLKNFGYNQPAIMVETSLEFLIDDHLRSFSEKLGERETVTNSRQN.

The region spanning 31-206 (SQTTDEIWFL…LFLKNFGYNQ (176 aa)) is the BPL/LPL catalytic domain. Residues 70-77 (RGGQVTYH), 137-139 (SIG), and 150-152 (GLA) contribute to the substrate site. Catalysis depends on Cys-168, which acts as the Acyl-thioester intermediate.

Belongs to the LipB family.

The protein localises to the cytoplasm. It carries out the reaction octanoyl-[ACP] + L-lysyl-[protein] = N(6)-octanoyl-L-lysyl-[protein] + holo-[ACP] + H(+). It participates in protein modification; protein lipoylation via endogenous pathway; protein N(6)-(lipoyl)lysine from octanoyl-[acyl-carrier-protein]: step 1/2. Its function is as follows. Catalyzes the transfer of endogenously produced octanoic acid from octanoyl-acyl-carrier-protein onto the lipoyl domains of lipoate-dependent enzymes. Lipoyl-ACP can also act as a substrate although octanoyl-ACP is likely to be the physiological substrate. In Coxiella burnetii (strain CbuK_Q154) (Coxiella burnetii (strain Q154)), this protein is Octanoyltransferase.